The sequence spans 722 residues: Glycine--tRNA ligase beta subunit (722 aa).

It belongs to the class-II aminoacyl-tRNA synthetase family. In terms of assembly, tetramer of two alpha and two beta subunits.

The protein resides in the cytoplasm. The catalysed reaction is tRNA(Gly) + glycine + ATP = glycyl-tRNA(Gly) + AMP + diphosphate. This Xylella fastidiosa (strain M12) protein is Glycine--tRNA ligase beta subunit.